The chain runs to 452 residues: Glutathione gamma-glutamylcysteinyltransferase 2 (452 aa).

The Peptidase C83 domain maps to 1-220; it reads MSMASLYRRS…GFMLISRPHR (220 aa). Positions 287–315 form a coiled coil; the sequence is EDVNQNLSSEEKSRLKLKQELLKQVQETK.

The protein belongs to the phytochelatin synthase family. In terms of tissue distribution, expressed in shoots, roots, leaves, stems and flowers.

The enzyme catalyses [Glu(-Cys)](n)-Gly + glutathione + H(+) = [Glu(-Cys)](n+1)-Gly + glycine. With respect to regulation, requires cadmium for activity. Also activated in heterologous system by AsO(4)(3-) ions, but not by Cu(2+), Zn(2+), Mn(2+) or Ni(2+) ions. Involved in the synthesis of phytochelatins (PC) and homophytochelatins (hPC), the heavy-metal-binding peptides of plants. The protein is Glutathione gamma-glutamylcysteinyltransferase 2 (PCS2) of Arabidopsis thaliana (Mouse-ear cress).